The chain runs to 273 residues: Undecaprenyl-diphosphatase (273 aa).

The next 7 helical transmembrane spans lie at 4–24 (LILI…FLPI), 43–63 (KAQV…CWEY), 82–102 (FVLN…LFIK), 108–128 (LFHP…ILWA), 183–203 (AAEF…FYDV), 217–237 (MFVV…RGFI), and 253–273 (IGFG…WSAG).

The protein belongs to the UppP family.

The protein localises to the cell inner membrane. The catalysed reaction is di-trans,octa-cis-undecaprenyl diphosphate + H2O = di-trans,octa-cis-undecaprenyl phosphate + phosphate + H(+). Catalyzes the dephosphorylation of undecaprenyl diphosphate (UPP). Confers resistance to bacitracin. This chain is Undecaprenyl-diphosphatase, found in Nitrosomonas eutropha (strain DSM 101675 / C91 / Nm57).